The primary structure comprises 558 residues: 2-isopropylmalate synthase (558 aa).

The Pyruvate carboxyltransferase domain maps to 28–304 (PIWCSVDLRD…DPELEFSNLN (277 aa)). The Mg(2+) site is built by aspartate 37, histidine 243, histidine 245, and asparagine 279. A regulatory domain region spans residues 438-558 (NRSPYYLKNY…VSALNRSKLK (121 aa)).

Belongs to the alpha-IPM synthase/homocitrate synthase family. LeuA type 2 subfamily. As to quaternary structure, homodimer. Mg(2+) is required as a cofactor.

Its subcellular location is the cytoplasm. It catalyses the reaction 3-methyl-2-oxobutanoate + acetyl-CoA + H2O = (2S)-2-isopropylmalate + CoA + H(+). It participates in amino-acid biosynthesis; L-leucine biosynthesis; L-leucine from 3-methyl-2-oxobutanoate: step 1/4. In terms of biological role, catalyzes the condensation of the acetyl group of acetyl-CoA with 3-methyl-2-oxobutanoate (2-ketoisovalerate) to form 3-carboxy-3-hydroxy-4-methylpentanoate (2-isopropylmalate). The chain is 2-isopropylmalate synthase from Clostridium acetobutylicum (strain ATCC 824 / DSM 792 / JCM 1419 / IAM 19013 / LMG 5710 / NBRC 13948 / NRRL B-527 / VKM B-1787 / 2291 / W).